Here is a 391-residue protein sequence, read N- to C-terminus: Alanine racemase (391 aa).

Catalysis depends on lysine 38, which acts as the Proton acceptor; specific for D-alanine. Residue lysine 38 is modified to N6-(pyridoxal phosphate)lysine. Arginine 136 contributes to the substrate binding site. Residue tyrosine 267 is the Proton acceptor; specific for L-alanine of the active site. Methionine 315 serves as a coordination point for substrate.

It belongs to the alanine racemase family. It depends on pyridoxal 5'-phosphate as a cofactor.

The catalysed reaction is L-alanine = D-alanine. It functions in the pathway amino-acid biosynthesis; D-alanine biosynthesis; D-alanine from L-alanine: step 1/1. Functionally, catalyzes the interconversion of L-alanine and D-alanine. May also act on other amino acids. This Clostridium kluyveri (strain ATCC 8527 / DSM 555 / NBRC 12016 / NCIMB 10680 / K1) protein is Alanine racemase (alr).